The chain runs to 556 residues: RING finger protein 207 (556 aa).

The segment at 25 to 64 (CPLCHAQYERPCLLDCFHEFCAGCLRGRAADGRLACPLCQ) adopts an RING-type zinc-finger fold. The segment at 93 to 145 (TEVVRCANCDLECGKQDAETTYFCNTCGQPLCARCRDETHRARMFARHDIVAL) adopts a B box-type; atypical zinc-finger fold. 4 residues coordinate Zn(2+): Cys-98, Cys-101, Cys-127, and His-132. 2 coiled-coil regions span residues 218 to 273 (TREA…NKAE) and 385 to 425 (FTEH…SLIK). Positions 517–556 (FQVPVDEPSDHPQNTHDDGVNAEAPARVSTLKPAMEKEVS) are disordered. Residues 524–535 (PSDHPQNTHDDG) are compositionally biased toward basic and acidic residues.

As to quaternary structure, interacts with the core-glycosylated, but not the fully glycosylated form of KCNH2/HERG. Interacts with DNAJA1 and HSPA8. Interacts (via the C-terminus) with HSPA1A; this interaction additively increases KCNH2 expression.

It localises to the cytoplasm. Its function is as follows. Plays a role in cardiac repolarization possibly by stabilizing membrane expression of the potassium channel KCNH2/HERG, or by assisting its synthesis, folding or export from the endoplasmic reticulum, in a heat shock protein-dependent manner. The chain is RING finger protein 207 (RNF207) from Bos taurus (Bovine).